The following is a 184-amino-acid chain: Oocyte-secreted protein 4A (184 aa).

A signal peptide spans 1-19; it reads MKISCVLGKLLMLFELIHG. An N-linked (GlcNAc...) asparagine glycan is attached at N128.

Belongs to the PLAC1 family.

Its subcellular location is the secreted. The chain is Oocyte-secreted protein 4A from Homo sapiens (Human).